Here is a 255-residue protein sequence, read N- to C-terminus: Pimeloyl-[acyl-carrier protein] methyl ester esterase (255 aa).

The 227-residue stretch at 16–242 (LVLLHGWGMN…SSHAPFITEP (227 aa)) folds into the AB hydrolase-1 domain. Substrate contacts are provided by residues Trp-22, 82 to 83 (SL), and 143 to 147 (FMALQ). Ser-82 functions as the Nucleophile in the catalytic mechanism. Residues Asp-207 and His-235 contribute to the active site. A substrate-binding site is contributed by His-235.

This sequence belongs to the AB hydrolase superfamily. Carboxylesterase BioH family. As to quaternary structure, monomer.

It is found in the cytoplasm. The enzyme catalyses 6-carboxyhexanoyl-[ACP] methyl ester + H2O = 6-carboxyhexanoyl-[ACP] + methanol + H(+). The protein operates within cofactor biosynthesis; biotin biosynthesis. Functionally, the physiological role of BioH is to remove the methyl group introduced by BioC when the pimeloyl moiety is complete. It allows to synthesize pimeloyl-ACP via the fatty acid synthetic pathway through the hydrolysis of the ester bonds of pimeloyl-ACP esters. In Vibrio vulnificus (strain YJ016), this protein is Pimeloyl-[acyl-carrier protein] methyl ester esterase.